The primary structure comprises 233 residues: Large ribosomal subunit protein uL1 (233 aa).

It belongs to the universal ribosomal protein uL1 family. As to quaternary structure, part of the 50S ribosomal subunit.

Binds directly to 23S rRNA. The L1 stalk is quite mobile in the ribosome, and is involved in E site tRNA release. Functionally, protein L1 is also a translational repressor protein, it controls the translation of the L11 operon by binding to its mRNA. The protein is Large ribosomal subunit protein uL1 of Thermotoga sp. (strain RQ2).